A 62-amino-acid chain; its full sequence is Photosystem II reaction center protein Z (62 aa).

2 consecutive transmembrane segments (helical) span residues 8-28 (ALFALIATSFLLVVGVPVAFA) and 41-61 (FSGASLWIGLVFLVGIPNSFI).

The protein belongs to the PsbZ family. As to quaternary structure, PSII is composed of 1 copy each of membrane proteins PsbA, PsbB, PsbC, PsbD, PsbE, PsbF, PsbH, PsbI, PsbJ, PsbK, PsbL, PsbM, PsbT, PsbY, PsbZ, Psb30/Ycf12, at least 3 peripheral proteins of the oxygen-evolving complex and a large number of cofactors. It forms dimeric complexes.

Its subcellular location is the plastid. It is found in the chloroplast thylakoid membrane. Its function is as follows. May control the interaction of photosystem II (PSII) cores with the light-harvesting antenna, regulates electron flow through the 2 photosystem reaction centers. PSII is a light-driven water plastoquinone oxidoreductase, using light energy to abstract electrons from H(2)O, generating a proton gradient subsequently used for ATP formation. This chain is Photosystem II reaction center protein Z, found in Adiantum capillus-veneris (Maidenhair fern).